A 442-amino-acid polypeptide reads, in one-letter code: Histidine--tRNA ligase (442 aa).

The protein belongs to the class-II aminoacyl-tRNA synthetase family. In terms of assembly, homodimer.

It is found in the cytoplasm. It catalyses the reaction tRNA(His) + L-histidine + ATP = L-histidyl-tRNA(His) + AMP + diphosphate + H(+). The chain is Histidine--tRNA ligase from Helicobacter pylori (strain P12).